Reading from the N-terminus, the 528-residue chain is GTPase Der (528 aa).

Composition is skewed to acidic residues over residues 1–12 and 30–62; these read MDVEGAFADEEE and GYDD…PDFG. The segment at 1–62 is disordered; the sequence is MDVEGAFADE…EDDFAAPDFG (62 aa). 2 EngA-type G domains span residues 90 to 253 and 263 to 436; these read CTVA…PEEP and RRVA…ENWD. Residues 96-103, 143-147, 205-208, 269-276, 316-320, and 381-384 each bind GTP; these read GRPNVGKS, DTGGW, NKFD, GKPNVGKS, DTAGL, and NKWD. The 83-residue stretch at 437-519 folds into the KH-like domain; it reads RRVSTGQLNN…PIRIAVRVRE (83 aa).

This sequence belongs to the TRAFAC class TrmE-Era-EngA-EngB-Septin-like GTPase superfamily. EngA (Der) GTPase family. As to quaternary structure, associates with the 50S ribosomal subunit.

In terms of biological role, GTPase that plays an essential role in the late steps of ribosome biogenesis. The chain is GTPase Der from Corynebacterium efficiens (strain DSM 44549 / YS-314 / AJ 12310 / JCM 11189 / NBRC 100395).